The primary structure comprises 290 residues: 4-diphosphocytidyl-2-C-methyl-D-erythritol kinase (290 aa).

Residue Lys-8 is part of the active site. Position 89–99 (89–99 (PIGAGVGGGSS)) interacts with ATP. Residue Asp-131 is part of the active site.

It belongs to the GHMP kinase family. IspE subfamily.

It carries out the reaction 4-CDP-2-C-methyl-D-erythritol + ATP = 4-CDP-2-C-methyl-D-erythritol 2-phosphate + ADP + H(+). It participates in isoprenoid biosynthesis; isopentenyl diphosphate biosynthesis via DXP pathway; isopentenyl diphosphate from 1-deoxy-D-xylulose 5-phosphate: step 3/6. In terms of biological role, catalyzes the phosphorylation of the position 2 hydroxy group of 4-diphosphocytidyl-2C-methyl-D-erythritol. This chain is 4-diphosphocytidyl-2-C-methyl-D-erythritol kinase, found in Chlamydia felis (strain Fe/C-56) (Chlamydophila felis).